A 383-amino-acid chain; its full sequence is Probable tRNA sulfurtransferase (383 aa).

Residues Asn-58–Lys-158 form the THUMP domain. ATP-binding positions include Leu-176 to Leu-177, Thr-201 to Phe-202, Arg-259, Gly-281, and Gln-290.

The protein belongs to the ThiI family.

The protein localises to the cytoplasm. The enzyme catalyses [ThiI sulfur-carrier protein]-S-sulfanyl-L-cysteine + a uridine in tRNA + 2 reduced [2Fe-2S]-[ferredoxin] + ATP + H(+) = [ThiI sulfur-carrier protein]-L-cysteine + a 4-thiouridine in tRNA + 2 oxidized [2Fe-2S]-[ferredoxin] + AMP + diphosphate. It carries out the reaction [ThiS sulfur-carrier protein]-C-terminal Gly-Gly-AMP + S-sulfanyl-L-cysteinyl-[cysteine desulfurase] + AH2 = [ThiS sulfur-carrier protein]-C-terminal-Gly-aminoethanethioate + L-cysteinyl-[cysteine desulfurase] + A + AMP + 2 H(+). It functions in the pathway cofactor biosynthesis; thiamine diphosphate biosynthesis. Functionally, catalyzes the ATP-dependent transfer of a sulfur to tRNA to produce 4-thiouridine in position 8 of tRNAs, which functions as a near-UV photosensor. Also catalyzes the transfer of sulfur to the sulfur carrier protein ThiS, forming ThiS-thiocarboxylate. This is a step in the synthesis of thiazole, in the thiamine biosynthesis pathway. The sulfur is donated as persulfide by IscS. This Malacoplasma penetrans (strain HF-2) (Mycoplasma penetrans) protein is Probable tRNA sulfurtransferase.